The primary structure comprises 674 residues: Probable potassium transport system protein Kup (674 aa).

Helical transmembrane passes span 7-27 (IFWG…TSPL), 52-72 (LSLV…LIAL), 95-115 (WLIL…TLTP), 145-165 (LVTF…TSFI), 169-189 (FGPL…VNLI), 204-224 (LMLL…SVFL), 244-264 (IYLT…GQGA), 291-311 (VYLF…QALI), 342-362 (IYIR…LVYF), 368-388 (MEAA…ILLS), 397-417 (VVFN…FLIS), and 425-445 (GGYV…IWYF).

Belongs to the HAK/KUP transporter (TC 2.A.72) family.

The protein resides in the cell membrane. The enzyme catalyses K(+)(in) + H(+)(in) = K(+)(out) + H(+)(out). Its function is as follows. Transport of potassium into the cell. Likely operates as a K(+):H(+) symporter. The chain is Probable potassium transport system protein Kup from Ligilactobacillus salivarius (strain UCC118) (Lactobacillus salivarius).